The chain runs to 475 residues: Actin-related protein 10 (475 aa).

It belongs to the actin family.

The protein resides in the cytoplasm. Its subcellular location is the cytoskeleton. The polypeptide is Actin-related protein 10 (Dictyostelium discoideum (Social amoeba)).